We begin with the raw amino-acid sequence, 365 residues long: tRNA/tmRNA (uracil-C(5))-methyltransferase (365 aa).

The S-adenosyl-L-methionine site is built by glutamine 189, tyrosine 217, asparagine 222, glutamate 238, and aspartate 298. Catalysis depends on cysteine 323, which acts as the Nucleophile. The active-site Proton acceptor is the glutamate 357.

The protein belongs to the class I-like SAM-binding methyltransferase superfamily. RNA M5U methyltransferase family. TrmA subfamily.

It catalyses the reaction uridine(54) in tRNA + S-adenosyl-L-methionine = 5-methyluridine(54) in tRNA + S-adenosyl-L-homocysteine + H(+). The enzyme catalyses uridine(341) in tmRNA + S-adenosyl-L-methionine = 5-methyluridine(341) in tmRNA + S-adenosyl-L-homocysteine + H(+). Dual-specificity methyltransferase that catalyzes the formation of 5-methyluridine at position 54 (m5U54) in all tRNAs, and that of position 341 (m5U341) in tmRNA (transfer-mRNA). This is tRNA/tmRNA (uracil-C(5))-methyltransferase from Shewanella halifaxensis (strain HAW-EB4).